The sequence spans 211 residues: Somatotropin (211 aa).

The first 23 residues, 1–23, serve as a signal peptide directing secretion; that stretch reads MASGFLLCPVLLAVFFMSPVEVG. His-40 is a Zn(2+) binding site. The cysteines at positions 73 and 184 are disulfide-linked. Glu-193 is a Zn(2+) binding site. Cys-201 and Cys-209 are joined by a disulfide.

It belongs to the somatotropin/prolactin family.

The protein localises to the secreted. Growth hormone plays an important role in growth control and is involved in the regulation of several anabolic processes. Implicated as an osmoregulatory substance important for seawater adaptation. The sequence is that of Somatotropin (gh) from Lepisosteus osseus (Long-nosed gar).